The sequence spans 624 residues: Aeromonas extracellular serine protease (624 aa).

The N-terminal stretch at 1–24 (MKQTSLALAITALLSTLPSALVQA) is a signal peptide. Cys28 and Cys48 are joined by a disulfide. Asn53 lines the Ca(2+) pocket. The Peptidase S8 domain occupies 59 to 421 (QWYLLNSGQD…GKVRDVKGLE (363 aa)). The active-site Charge relay system is Asp102. Asp111 serves as a coordination point for Ca(2+). The disordered stretch occupies residues 116 to 140 (VRPGSKNVVTGSDDPTPTDPDTAHG). His139 serves as the catalytic Charge relay system. Positions 150, 152, 154, 156, 321, 322, 324, 327, 330, and 350 each coordinate Ca(2+). Cysteines 325 and 350 form a disulfide. Residue Ser360 is the Charge relay system of the active site. One can recognise a P/Homo B domain in the interval 456–622 (LPPLVQLPWQ…SLRVLGHDAN (167 aa)). 6 residues coordinate Ca(2+): Asp478, Asp512, Asp577, Ala579, Asn602, and Asn603.

The protein belongs to the peptidase S8 family. Furin subfamily. As to quaternary structure, forms a complex with the chaperone ORF2 in the periplasm. After translocation of the ASP-ORF2 complex from the periplasm to the extracellular space, the complex is dissociated in a pH-dependent manner. Requires Ca(2+) as cofactor.

It localises to the periplasm. The protein localises to the secreted. It carries out the reaction Cleavage of -Lys-Lys-|-Xaa and -Lys-Arg-|-Xaa bonds.. Its activity is regulated as follows. Folding, maturation and production of the active form of the protease by the cell requires a protein (ORF2), encoded just downstream of asp, which acts as a chaperone. Formation of a complex with ORF2 in the periplasm also inactivates the protease activity and likely protects ASP from intrinsic proteases. In vitro, protease activity is inhibited by human alpha-2-macroglobulin, suggesting that this inhibitor can impede ASP virulence activities in A.sobria infection sites. However, slow ASP inhibition by alpha-2-macroglobulin in plasma may indicate insufficient ASP control in vivo. Activity is inhibited by serine protease inhibitors such as 4-(2-aminoethyl)-benzenesulfonyl fluoride (AEBSF) and diisopropyl fluorophosphate (DFP). Not inhibited by metallo-protease inhibitors and cysteine protease inhibitors. The treatment with reagents to modify sulfhydryl group do not reduce the activity. In terms of biological role, exhibits serine protease activity. Preferentially cleaves the peptide bond following two basic residues, one of which is Lys, but does not recognize the bond following a single basic residue. Probable potent virulence factor that cleaves various host plasma proteins, including prekallikrein, prothrombin and fibrinogen. ASP induces vascular leakage and reduction in blood pressure by activating the host plasma kallikrein/kinin system. It affects the host coagulation system during infection through activation of prothrombin to alpha-thrombin and degradation of fibrinogen, which impairs plasma clottability. It also hydrolyzes the complement component C5, releasing the C5a anaphylatoxin, which causes the formation of pus and edema. In addition, degrades its external chaperone ORF2 after the secretion of the ASP-ORF2 complex. This is Aeromonas extracellular serine protease from Aeromonas sobria.